Here is a 1155-residue protein sequence, read N- to C-terminus: MHC class II transactivator (1155 aa).

The required for acetyltransferase activity stretch occupies residues 171–210; that stretch reads AYANIAELDQYVFQDTQLEGLSKDLFIEHIGAEEGFGENI. Disordered regions lie at residues 217–237 and 297–357; these read GQKP…KHRK and SLSI…IKLP. A compositionally biased stretch (basic and acidic residues) spans 224 to 233; that stretch reads RFPEEHAMDS. In terms of domain architecture, NACHT spans 439-749; the sequence is QVVAVLGKAG…CFLGAVWLAQ (311 aa). Position 445–452 (445–452) interacts with GTP; that stretch reads GKAGQGKS. 4 LRR repeats span residues 1010 to 1033, 1041 to 1062, 1070 to 1091, and 1098 to 1119; these read SLQH…SKLS, ALET…KLAE, SLLR…SLAQ, and SLRV…QLAS.

As to quaternary structure, interacts with ZXDA and ZXDC. Interacts with PML (isoform PML-2). Interacts with TAF7; interaction inhibits CIITA acetyltransferase activity, thereby repressing transcription. In terms of processing, autophosphorylated, affecting interaction with TAF7. Expressed at very high levels in dendritic cells, at very low levels in spleen and thymus and is not detected in other tissues. In terms of tissue distribution, detected at high levels in spleen and tonsil as well as in a number of B-lymphocyte cell lines, and at very low levels in dendritic cells.

It is found in the nucleus. The protein resides in the PML body. The catalysed reaction is L-seryl-[protein] + ATP = O-phospho-L-seryl-[protein] + ADP + H(+). The enzyme catalyses L-threonyl-[protein] + ATP = O-phospho-L-threonyl-[protein] + ADP + H(+). Its function is as follows. Essential for transcriptional activity of the HLA class II promoter; activation is via the proximal promoter. Does not bind DNA. May act in a coactivator-like fashion through protein-protein interactions by contacting factors binding to the proximal MHC class II promoter, to elements of the transcription machinery, or both. Alternatively it may activate HLA class II transcription by modifying proteins that bind to the MHC class II promoter. Also mediates enhanced MHC class I transcription, the promoter element requirements for CIITA-mediated transcription are distinct from those of constitutive MHC class I transcription, and CIITA can functionally replace TAF1 at these genes. Activates CD74 transcription. Exhibits intrinsic GTP-stimulated acetyltransferase activity. Exhibits serine/threonine protein kinase activity: phosphorylates the TFIID component TAF7, the RAP74 subunit of the general transcription factor TFIIF, histone H2B at 'Ser-37' and other histones. In Mus musculus (Mouse), this protein is MHC class II transactivator.